We begin with the raw amino-acid sequence, 259 residues long: Phosphatidylglycerol--prolipoprotein diacylglyceryl transferase (259 aa).

7 consecutive transmembrane segments (helical) span residues 9–29 (LGPL…ILAV), 48–68 (DFIL…YVIF), 83–103 (IWHG…VLFI), 114–133 (DFLD…GRWG), 167–187 (TPTF…IMIL), 197–217 (GEVA…IEGM), and 227–247 (LRVS…LIVI). Residue Arg131 participates in a 1,2-diacyl-sn-glycero-3-phospho-(1'-sn-glycerol) binding.

It belongs to the Lgt family.

Its subcellular location is the cell membrane. The catalysed reaction is L-cysteinyl-[prolipoprotein] + a 1,2-diacyl-sn-glycero-3-phospho-(1'-sn-glycerol) = an S-1,2-diacyl-sn-glyceryl-L-cysteinyl-[prolipoprotein] + sn-glycerol 1-phosphate + H(+). The protein operates within protein modification; lipoprotein biosynthesis (diacylglyceryl transfer). Catalyzes the transfer of the diacylglyceryl group from phosphatidylglycerol to the sulfhydryl group of the N-terminal cysteine of a prolipoprotein, the first step in the formation of mature lipoproteins. In Streptococcus mutans serotype c (strain ATCC 700610 / UA159), this protein is Phosphatidylglycerol--prolipoprotein diacylglyceryl transferase.